The primary structure comprises 200 residues: Pyrrolidone-carboxylate peptidase (200 aa).

Active-site residues include Glu-78, Cys-141, and His-165.

The protein belongs to the peptidase C15 family. As to quaternary structure, homotetramer.

It is found in the cytoplasm. It carries out the reaction Release of an N-terminal pyroglutamyl group from a polypeptide, the second amino acid generally not being Pro.. Functionally, removes 5-oxoproline from various penultimate amino acid residues except L-proline. The sequence is that of Pyrrolidone-carboxylate peptidase from Lactobacillus helveticus (strain DPC 4571).